Here is a 35-residue protein sequence, read N- to C-terminus: Delta-theraphotoxin-Hm1a (35 aa).

Cystine bridges form between cysteine 2–cysteine 16, cysteine 9–cysteine 21, and cysteine 15–cysteine 28.

It belongs to the neurotoxin 10 (Hwtx-1) family. 09 (HaTx) subfamily. As to expression, expressed by the venom gland.

The protein resides in the secreted. Its function is as follows. Gating-modifier toxin that potently inhibits inactivation of the mammalian Nav1.1/SCN1A sodium channel (EC(50)=38 nM). Also moderately inhibits inactivation of Nav1.2/SCN2A (EC(50)=236 nM) and Nav1.3/SCN3A (EC(50)=220 nM) when the channels are expressed in oocytes without the beta-1 auxiliary subunit. Does not inhibit inactivation of Nav1.2/SCN2A when the channel is coexpressed with the beta-1 auxiliary subunit. When tested on Nav1.1/SCN1A channel, it enhances peak current amplitude and potently delays channel inactivation in a dose-dependent manner, leading to a large sustained current. It has no effect on the voltage-dependence of steady-state activation, and induces a depolarizing shift in the voltage dependence of inactivation. In addition, it does not modify the recovery from fast inactivation in Nav1.1/SCN1A. The binding affinity and subtype selectivity of the toxin towards Nav1.1/SCN1A channel is determined by residues within both the S1-S2 and S3-S4 loops of the domain IV voltage sensor of the channel. This toxin also weakly inhibits several subtypes of voltage-gated potassium channels. It moderately blocks Kv2.1/KCNB1 (23% inhibition at 100 nM), Kv2.2/KCNB2 (19.7% at 100 nM and 51% at 300 nM), Kv4.1/KCND1 (IC(50)=280 nM), Kv4.2/KCND2 (39% at 300 nM) and Kv4.3/KCND3 (43% at 300 nM). In vivo, intracerebroventricular injection into mice elicits convulsions, spasms, tremors and rapid death. When injected into mouse hindpaw, the toxin elicits an immediate and robust response to pain. However, intraplantar injection of toxin does not cause neurogenic inflammation or alter sensitivity to heat, indicative of a modality-specific effect on mechanosensitive neurons. In Dravet syndrome mice model, intracerebroventricular infusion of this peptide rescues mice from seizures and premature death. In Heteroscodra maculata (Togo starburst tarantula), this protein is Delta-theraphotoxin-Hm1a.